Consider the following 154-residue polypeptide: Large ribosomal subunit protein uL13 (154 aa).

Belongs to the universal ribosomal protein uL13 family. As to quaternary structure, part of the 50S ribosomal subunit.

In terms of biological role, this protein is one of the early assembly proteins of the 50S ribosomal subunit, although it is not seen to bind rRNA by itself. It is important during the early stages of 50S assembly. In Bradyrhizobium sp. (strain BTAi1 / ATCC BAA-1182), this protein is Large ribosomal subunit protein uL13.